Reading from the N-terminus, the 208-residue chain is Imidazoleglycerol-phosphate dehydratase (208 aa).

Belongs to the imidazoleglycerol-phosphate dehydratase family.

The protein localises to the cytoplasm. The enzyme catalyses D-erythro-1-(imidazol-4-yl)glycerol 3-phosphate = 3-(imidazol-4-yl)-2-oxopropyl phosphate + H2O. It functions in the pathway amino-acid biosynthesis; L-histidine biosynthesis; L-histidine from 5-phospho-alpha-D-ribose 1-diphosphate: step 6/9. The sequence is that of Imidazoleglycerol-phosphate dehydratase from Hyphomonas neptunium (strain ATCC 15444).